Consider the following 932-residue polypeptide: 3-hydroxy-3-methylglutaryl-coenzyme A reductase (932 aa).

A run of 6 helical transmembrane segments spans residues 20–40 (VIVC…FTGL), 59–79 (LSSD…YLYL), 92–112 (ILGI…SAVI), 113–133 (HLFG…LLLI), 162–182 (MAIL…VISI), and 193–213 (VFCC…MTFF). An N-linked (GlcNAc...) asparagine glycan is attached at asparagine 279. The helical transmembrane segment at 322–342 (ILTAILATVLASHYIFFSDLA) threads the bilayer. A linker region spans residues 343-467 (TYPEKRVSIM…APRPMPELLE (125 aa)). Basic and acidic residues predominate over residues 357–367 (VVNPGSDHEDA). Residues 357–442 (VVNPGSDHED…SGSEDEEEEV (86 aa)) form a disordered region. Residues 374–403 (GTLSSSPSTSDVRVIESMTSRTQACQTDPV) are compositionally biased toward polar residues. Positions 406–421 (SPRNSRSSSPVSSHSV) are enriched in low complexity. The tract at residues 468–932 (ILNVGKGPNA…APGTCTANAS (465 aa)) is catalytic. Residues glutamate 575, lysine 707, and aspartate 783 each act as charge relay system in the active site. Residue asparagine 850 is glycosylated (N-linked (GlcNAc...) asparagine). The active-site Proton donor is the histidine 882. N-linked (GlcNAc...) asparagine glycosylation occurs at asparagine 886. Phosphoserine; by AMPK is present on serine 888.

It belongs to the HMG-CoA reductase family.

Its subcellular location is the endoplasmic reticulum membrane. The enzyme catalyses (R)-mevalonate + 2 NADP(+) + CoA = (3S)-3-hydroxy-3-methylglutaryl-CoA + 2 NADPH + 2 H(+). It functions in the pathway metabolic intermediate biosynthesis; (R)-mevalonate biosynthesis; (R)-mevalonate from acetyl-CoA: step 3/3. Functionally, this transmembrane glycoprotein is involved in the control of cholesterol biosynthesis. It is the rate-limiting enzyme of sterol biosynthesis. The chain is 3-hydroxy-3-methylglutaryl-coenzyme A reductase (HMGCR) from Strongylocentrotus purpuratus (Purple sea urchin).